Consider the following 165-residue polypeptide: Protein SprT (165 aa).

Residues 10–158 (EACYRQAEHF…CRRCKATLVF (149 aa)) enclose the SprT-like domain. His69 contacts Zn(2+). Glu70 is an active-site residue. Residue His73 coordinates Zn(2+).

It belongs to the SprT family. It depends on Zn(2+) as a cofactor.

The protein localises to the cytoplasm. The protein is Protein SprT of Pseudomonas aeruginosa (strain LESB58).